The sequence spans 510 residues: Probable sphingolipid transporter spinster homolog 3 (510 aa).

A helical membrane pass occupies residues 44–64 (SSLSPVWLLVIFCIINLLNYM). Residues Asn-75 and Asn-98 are each glycosylated (N-linked (GlcNAc...) asparagine). The next 11 helical transmembrane spans lie at 106–126 (VLSS…ASLA), 136–156 (VWTI…IVLC), 158–178 (MFVG…IDDN), 185–205 (AAWL…GYVY), 219–239 (FWGE…MKPL), 298–318 (VFVV…AYSY), 336–356 (IFGA…GFIL), 369–387 (LLSG…AFTL), 392–414 (GFIA…VNYV), 430–450 (ISTV…VGIV), and 462–482 (LILT…KINL).

The protein belongs to the major facilitator superfamily. Spinster (TC 2.A.1.49) family.

The protein localises to the mitochondrion inner membrane. Its function is as follows. Probable sphingolipid transporter. The protein is Probable sphingolipid transporter spinster homolog 3 of Arabidopsis thaliana (Mouse-ear cress).